A 545-amino-acid polypeptide reads, in one-letter code: CTP synthase (545 aa).

An amidoligase domain region spans residues 1 to 266; that stretch reads MKTNYIFVTG…DDYICKRFSL (266 aa). Residue Ser14 participates in CTP binding. UTP is bound at residue Ser14. Residues 15–20 and Asp72 contribute to the ATP site; that span reads SLGKGI. Asp72 and Glu140 together coordinate Mg(2+). CTP is bound by residues 147–149, 187–192, and Lys223; these read DIE and KTKPTQ. UTP contacts are provided by residues 187–192 and Lys223; that span reads KTKPTQ. 239–241 is a binding site for ATP; that stretch reads KDV. The Glutamine amidotransferase type-1 domain maps to 291–542; it reads TIGMVGKYVE…VKAAGKYQKG (252 aa). Residue Gly352 coordinates L-glutamine. The active-site Nucleophile; for glutamine hydrolysis is the Cys379. Residues 380 to 383, Glu403, and Arg470 each bind L-glutamine; that span reads LGMQ. Active-site residues include His515 and Glu517.

The protein belongs to the CTP synthase family. In terms of assembly, homotetramer.

It catalyses the reaction UTP + L-glutamine + ATP + H2O = CTP + L-glutamate + ADP + phosphate + 2 H(+). It carries out the reaction L-glutamine + H2O = L-glutamate + NH4(+). The catalysed reaction is UTP + NH4(+) + ATP = CTP + ADP + phosphate + 2 H(+). The protein operates within pyrimidine metabolism; CTP biosynthesis via de novo pathway; CTP from UDP: step 2/2. With respect to regulation, allosterically activated by GTP, when glutamine is the substrate; GTP has no effect on the reaction when ammonia is the substrate. The allosteric effector GTP functions by stabilizing the protein conformation that binds the tetrahedral intermediate(s) formed during glutamine hydrolysis. Inhibited by the product CTP, via allosteric rather than competitive inhibition. Catalyzes the ATP-dependent amination of UTP to CTP with either L-glutamine or ammonia as the source of nitrogen. Regulates intracellular CTP levels through interactions with the four ribonucleotide triphosphates. This is CTP synthase from Photorhabdus laumondii subsp. laumondii (strain DSM 15139 / CIP 105565 / TT01) (Photorhabdus luminescens subsp. laumondii).